The following is a 233-amino-acid chain: uncharacterized protein (233 aa).

An N-terminal signal peptide occupies residues 1–23 (MEIKYFLVLLVGFLLVLPSIVNP). The segment at 42–217 (LDVNNPHNPN…HHHHQEASEC (176 aa)) is disordered. Low complexity predominate over residues 45 to 64 (NNPHNPNNNPHNPHNPNNNP). Residues 65-211 (HHPHHLHHHH…HPHPHHHHHH (147 aa)) show a composition bias toward basic residues.

The protein localises to the secreted. This is an uncharacterized protein from Dictyostelium discoideum (Social amoeba).